The following is a 140-amino-acid chain: C-type lectin 6 (140 aa).

The signal sequence occupies residues 1–23 (MGRLVFVSFGLLVVFLSLSGTGA). 3 cysteine pairs are disulfide-bonded: cysteine 25–cysteine 36, cysteine 53–cysteine 138, and cysteine 115–cysteine 130. One can recognise a C-type lectin domain in the interval 32 to 139 (YEGHCYRVFQ…CSKTHNVICK (108 aa)).

Belongs to the snaclec family. Heteromultimer; disulfide-linked. Expressed by the venom gland.

The protein localises to the secreted. Functionally, interferes with one step of hemostasis (modulation of platelet aggregation, or coagulation cascade, for example). This chain is C-type lectin 6, found in Crotalus adamanteus (Eastern diamondback rattlesnake).